The sequence spans 375 residues: MGVITAHCYCFTTVGSHKPYLSPSSHNFRHSPSVSLSSSSSSSPSPLRRISCQASSAPAAESTLTAKVGNGLKDFIHIDDFDKETILKILDRAIEVKTLLKSGDRTFRPFEGKTMSMIFAKPSMRTRVSFETGFSLLGGHAIYLGPNDIQMGKREETRDVARVLSRYNDIIMARVFSHQDILDLAKYASVPVINGLTDYNHPVQIMADALTMIEHIGRFEGTKVVYVGDGNNIVHSWLLLAAVVPFHFVCACPKGFEPDAKTVEKARKAGISKIEISHDPKEAVRGADVVYSDVWASMGQKEEAAYRREAFKGFQVDQNLMDAAGSKAFFMHCLPAERGVEVTDEVVEAPYSIVFPQAENRMHAQNAIMLHVLGK.

Carbamoyl phosphate contacts are provided by residues 123 to 126, Arg-174, His-201, and Gln-204; that span reads SMRT. L-ornithine is bound by residues Asn-232, Asp-293, Ser-297, and Met-298. Residue Cys-333 is the Proton acceptor of the active site. Carbamoyl phosphate is bound by residues 333–334 and Arg-361; that span reads CL.

It belongs to the aspartate/ornithine carbamoyltransferase superfamily. OTCase family. As to quaternary structure, homotrimer.

It is found in the plastid. It localises to the chloroplast. The catalysed reaction is carbamoyl phosphate + L-ornithine = L-citrulline + phosphate + H(+). This is Ornithine carbamoyltransferase, chloroplastic (ARGF) from Pisum sativum (Garden pea).